Here is a 354-residue protein sequence, read N- to C-terminus: Peptide chain release factor 1 (354 aa).

N5-methylglutamine is present on glutamine 231.

The protein belongs to the prokaryotic/mitochondrial release factor family. In terms of processing, methylated by PrmC. Methylation increases the termination efficiency of RF1.

It is found in the cytoplasm. In terms of biological role, peptide chain release factor 1 directs the termination of translation in response to the peptide chain termination codons UAG and UAA. This is Peptide chain release factor 1 from Acholeplasma laidlawii (strain PG-8A).